The primary structure comprises 519 residues: FAD-dependent monooxygenase macF (519 aa).

A signal peptide spans 1-20 (MTKMTSIIGILMGVLTTATA). Residues 88–262 (CRLNASCIVT…TEYDLTTNTG (175 aa)) form the FAD-binding PCMH-type domain. Histidine 125 is subject to Pros-8alpha-FAD histidine.

Belongs to the oxygen-dependent FAD-linked oxidoreductase family.

The protein operates within secondary metabolite biosynthesis; terpenoid biosynthesis. FAD-dependent monooxygenase; part of the gene cluster that mediates the biosynthesis of macrophorins, isoprenoid epoxycyclohexenones containing cyclized drimane moieties. The first step of the pathway is the synthesis of 6-methylsalicylic acid (6-MSA) by the polyketide synthase macA. 6-MSA is then converted to m-cresol by the decarboxylase macB. The cytochrome P450 monooxygenase macC then catalyzes the oxidation of m-cresol to toluquinol. Epoxidation of toluquinol is then performed by the short chain dehydrogenase macD, with the help of macE, and a further prenylation by macG leads to 7-deacetoxyyanuthone A. The next step is the hydroxylation of C-22 of 7-deacetoxyyanuthone A by the cytochrome P450 monooxygenase macH to yield 22-deacetylyanuthone A. O-Mevalon transferase macI then attaches mevalon to the hydroxyl group of 22-deacetylyanuthone A to produce yanuthone E. The terpene cyclase macJ catalyzes the cyclization of 22-deacetylyanuthone A to macrophorin A. MacJ is also able to catalyze cyclization of yanuthone E and 7-deacetoxyyanuthone A to their corresponding macrophorins. The macJ products can be further modified by macH and macJ, as well as by the FAD-dependent monooxygenase macF, to produce additional macrophorins, including 4'-oxomacrophorin A, 4'-oxomacrophorin D and 4'-oxomacrophorin E. This is FAD-dependent monooxygenase macF from Penicillium terrestre.